A 325-amino-acid polypeptide reads, in one-letter code: ADP-ribose glycohydrolase MACROD1 (325 aa).

Residues 21–55 (LGAPRPWPGPSPGATRTRSSACGPPASLSAHHPRA) form a disordered region. 3 positions are modified to N6-succinyllysine: K96, K103, and K129. K138 is covalently cross-linked (Glycyl lysine isopeptide (Lys-Gly) (interchain with G-Cter in SUMO2)). Positions 141-322 (EPKYKKDKQL…IYRERLPHYF (182 aa)) constitute a Macro domain. A substrate-binding site is contributed by 159–161 (GDI). N6-acetyllysine is present on K163. Residues 172 to 174 (AAN), 179 to 184 (GGGGVD), 267 to 273 (ISTGVFG), and F306 contribute to the substrate site.

Belongs to the MacroD-type family. MacroD1/2-like subfamily. In terms of assembly, interacts with ESR1; Interacts in a manner that is estrogen independent but is enhanced by estrogen. Interacts (via macro domain) with AR.

The protein localises to the nucleus. It carries out the reaction 3''-O-acetyl-ADP-D-ribose + H2O = ADP-D-ribose + acetate + H(+). It catalyses the reaction 2''-O-acetyl-ADP-D-ribose + H2O = ADP-D-ribose + acetate + H(+). The catalysed reaction is 4-O-(ADP-D-ribosyl)-L-aspartyl-[protein] + H2O = L-aspartyl-[protein] + ADP-D-ribose + H(+). The enzyme catalyses 5-O-(ADP-D-ribosyl)-L-glutamyl-[protein] + H2O = L-glutamyl-[protein] + ADP-D-ribose + H(+). It carries out the reaction alpha-NAD(+) + H2O = ADP-D-ribose + nicotinamide + H(+). Its activity is regulated as follows. Subject to competitive inhibition by the product ADP-ribose. Its function is as follows. Removes ADP-ribose from aspartate and glutamate residues in proteins bearing a single ADP-ribose moiety. Inactive towards proteins bearing poly-ADP-ribose. Deacetylates O-acetyl-ADP ribose, a signaling molecule generated by the deacetylation of acetylated lysine residues in histones and other proteins. Plays a role in estrogen signaling. Binds to androgen receptor (AR) and amplifies the transactivation function of AR in response to androgen. May play an important role in carcinogenesis and/or progression of hormone-dependent cancers by feed-forward mechanism that activates ESR1 transactivation. Could be an ESR1 coactivator, providing a positive feedback regulatory loop for ESR1 signal transduction. Could be involved in invasive growth by down-regulating CDH1 in endometrial cancer cells. Enhances ESR1-mediated transcription activity. This Bos taurus (Bovine) protein is ADP-ribose glycohydrolase MACROD1 (MACROD1).